We begin with the raw amino-acid sequence, 283 residues long: Pantothenate synthetase (283 aa).

An ATP-binding site is contributed by Met-30–His-37. The Proton donor role is filled by His-37. Gln-61 contacts (R)-pantoate. Residue Gln-61 participates in beta-alanine binding. Residue Gly-148 to Asp-151 coordinates ATP. Gln-154 lines the (R)-pantoate pocket. Position 185 to 188 (Met-185 to Arg-188) interacts with ATP.

It belongs to the pantothenate synthetase family. In terms of assembly, homodimer.

The protein resides in the cytoplasm. The enzyme catalyses (R)-pantoate + beta-alanine + ATP = (R)-pantothenate + AMP + diphosphate + H(+). It participates in cofactor biosynthesis; (R)-pantothenate biosynthesis; (R)-pantothenate from (R)-pantoate and beta-alanine: step 1/1. In terms of biological role, catalyzes the condensation of pantoate with beta-alanine in an ATP-dependent reaction via a pantoyl-adenylate intermediate. This chain is Pantothenate synthetase, found in Carboxydothermus hydrogenoformans (strain ATCC BAA-161 / DSM 6008 / Z-2901).